The chain runs to 442 residues: D-serine dehydratase (442 aa).

At Lys118 the chain carries N6-(pyridoxal phosphate)lysine.

It belongs to the serine/threonine dehydratase family. DsdA subfamily. As to quaternary structure, monomer. Pyridoxal 5'-phosphate serves as cofactor.

The enzyme catalyses D-serine = pyruvate + NH4(+). The polypeptide is D-serine dehydratase (Shigella sonnei (strain Ss046)).